We begin with the raw amino-acid sequence, 92 residues long: Defensin (92 aa).

An N-terminal signal peptide occupies residues methionine 1–alanine 20. The propeptide occupies glutamine 21–arginine 52. Intrachain disulfides connect cysteine 55-cysteine 82, cysteine 68-cysteine 88, and cysteine 72-cysteine 90.

Belongs to the invertebrate defensin family. Type 1 subfamily. As to expression, hemolymph (at protein level).

Its subcellular location is the secreted. Its function is as follows. Responsible for the anti Gram-positive activity of immune hemolymph. Expressed in the absence of immune challenge during metamorphosis. This chain is Defensin (Def), found in Drosophila melanogaster (Fruit fly).